We begin with the raw amino-acid sequence, 527 residues long: N-acetylglutamate synthase, mitochondrial (527 aa).

The transit peptide at 1–18 directs the protein to the mitochondrion; the sequence is MATAWVATALRSAAAARR. The interval 14–91 is disordered; sequence AAARRLRSPG…PLESPAPPAG (78 aa). The segment at 19 to 369 is amino-acid kinase domain (AAK); it reads LRSPGGPGGS…CGTLFKNAER (351 aa). Positions 54 to 63 are enriched in basic and acidic residues; that stretch reads AHAEDAEGAK. A compositionally biased stretch (pro residues) spans 77–89; that stretch reads TPLPTPLESPAPP. The region spanning 368-519 is the N-acetyltransferase domain; the sequence is ERMLRVRNLD…HAKGLPDSFC (152 aa). Substrate is bound by residues lysine 394, lysine 437, and 467–472; that span reads RSRVTN.

This sequence belongs to the acetyltransferase family. Homodimer. Homotetramer. Probably processed by mitochondrial processing peptidase (MPP). The long form has not yet been isolated. In terms of tissue distribution, highly expressed in the liver and small intestine. Weakly expressed in the kidney, spleen and testis.

The protein resides in the mitochondrion matrix. The catalysed reaction is L-glutamate + acetyl-CoA = N-acetyl-L-glutamate + CoA + H(+). It functions in the pathway amino-acid biosynthesis; L-arginine biosynthesis; N(2)-acetyl-L-ornithine from L-glutamate: step 1/4. With respect to regulation, increased by L-arginine. In terms of biological role, plays a role in the regulation of ureagenesis by producing the essential cofactor N-acetylglutamate (NAG), thus modulating carbamoylphosphate synthase I (CPS1) activity. In Mus musculus (Mouse), this protein is N-acetylglutamate synthase, mitochondrial (Nags).